The following is a 56-amino-acid chain: MGFATLWYSHPRKYGQGSRCCRACSNRHGLIRKYGLNICRQCFREYANDIGFKKLD.

Positions 21, 24, 39, and 42 each coordinate Zn(2+).

It belongs to the universal ribosomal protein uS14 family. As to quaternary structure, component of the 40S small ribosomal subunit. Requires Zn(2+) as cofactor.

It localises to the cytoplasm. It is found in the cytosol. The protein localises to the rough endoplasmic reticulum. The chain is Small ribosomal subunit protein uS14 (RpS29) from Drosophila melanogaster (Fruit fly).